Here is a 623-residue protein sequence, read N- to C-terminus: Phosphoenolpyruvate carboxykinase [GTP] (623 aa).

Substrate-binding positions include R86 and 220 to 222 (YGG). Mn(2+) is bound by residues K229 and H248. Residue S270 participates in substrate binding. 271-276 (MCGKTS) lines the GTP pocket. The active site involves C272. A Mn(2+)-binding site is contributed by D289. 384–386 (NAR) is a substrate binding site. GTP contacts are provided by R386 and R418.

It belongs to the phosphoenolpyruvate carboxykinase [GTP] family. Homotetramer. Mn(2+) serves as cofactor.

It is found in the cytoplasm. It carries out the reaction oxaloacetate + GTP = phosphoenolpyruvate + GDP + CO2. It functions in the pathway carbohydrate biosynthesis; gluconeogenesis. Involved in the gluconeogenesis. Catalyzes the conversion of oxaloacetate (OAA) to phosphoenolpyruvate (PEP), the rate-limiting step in the metabolic pathway that produces glucose from lactate and other precursors derived from the citric acid cycle. The sequence is that of Phosphoenolpyruvate carboxykinase [GTP] (pckG) from Thermococcus kodakarensis (strain ATCC BAA-918 / JCM 12380 / KOD1) (Pyrococcus kodakaraensis (strain KOD1)).